Here is a 331-residue protein sequence, read N- to C-terminus: L-lactate dehydrogenase A chain (331 aa).

Residues 29–57 (GMVG…MEDK) and Arg98 contribute to the NAD(+) site. Substrate-binding residues include Arg105, Asn137, and Arg168. Asn137 serves as a coordination point for NAD(+). His192 (proton acceptor) is an active-site residue. Thr247 serves as a coordination point for substrate.

This sequence belongs to the LDH/MDH superfamily. LDH family. As to quaternary structure, homotetramer.

Its subcellular location is the cytoplasm. It catalyses the reaction (S)-lactate + NAD(+) = pyruvate + NADH + H(+). It participates in fermentation; pyruvate fermentation to lactate; (S)-lactate from pyruvate: step 1/1. Its function is as follows. Interconverts simultaneously and stereospecifically pyruvate and lactate with concomitant interconversion of NADH and NAD(+). In Dissostichus mawsoni (Antarctic cod), this protein is L-lactate dehydrogenase A chain (ldha).